The primary structure comprises 135 residues: uncharacterized protein (135 aa).

The protein belongs to the MG067/MG068/MG395 family.

This is an uncharacterized protein from Mycoplasma pneumoniae (strain ATCC 29342 / M129 / Subtype 1) (Mycoplasmoides pneumoniae).